The primary structure comprises 146 residues: ATP synthase epsilon chain (146 aa).

The protein belongs to the ATPase epsilon chain family. F-type ATPases have 2 components, CF(1) - the catalytic core - and CF(0) - the membrane proton channel. CF(1) has five subunits: alpha(3), beta(3), gamma(1), delta(1), epsilon(1). CF(0) has three main subunits: a, b and c.

The protein resides in the cell membrane. Its function is as follows. Produces ATP from ADP in the presence of a proton gradient across the membrane. This Lactobacillus helveticus (strain DPC 4571) protein is ATP synthase epsilon chain.